Reading from the N-terminus, the 138-residue chain is Unique cartilage matrix-associated protein (138 aa).

Residues 1 to 27 form the signal peptide; sequence MSWRRVILLSSLLALVLLCMLQEGTSA. Residues 28 to 64 constitute a propeptide, ucma-N; it reads SVGSRQAAAEGVQEGVKQKIFMQESDASNFLKRRGKR. The tract at residues 58-78 is disordered; it reads LKRRGKRSPKSRDEVNAENRQ. Over residues 67-78 the composition is skewed to basic and acidic residues; the sequence is KSRDEVNAENRQ. A coiled-coil region spans residues 78 to 122; it reads QRLRDDELRREYYEEQRNEFENFVEEQRDEQEERTREAVEQWRQW.

Belongs to the UCMA family. Proteolytically cleaved by a furin-like convertase to generate a persistent C-terminal fragment found in almost the entire cartilage matrix, and affecting osteoblast differentiation. Post-translationally, sulfated on one or two tyrosine residues within the tryptic peptide 121-135. In terms of tissue distribution, predominantly expressed in resting chondrocytes.

It is found in the secreted. The protein resides in the extracellular space. The protein localises to the extracellular matrix. Its subcellular location is the golgi apparatus. It localises to the cytoplasm. It is found in the cytoskeleton. May be involved in the negative control of osteogenic differentiation of osteochondrogenic precursor cells in peripheral zones of fetal cartilage and at the cartilage-bone interface. The chain is Unique cartilage matrix-associated protein (Ucma) from Mus musculus (Mouse).